Here is a 212-residue protein sequence, read N- to C-terminus: ATP-dependent Clp protease proteolytic subunit 2 (212 aa).

Residues 1 to 20 (MSHNTSIASQGMPAMAGPET) form a disordered region. Catalysis depends on serine 107, which acts as the Nucleophile. Histidine 132 is a catalytic residue.

Belongs to the peptidase S14 family. As to quaternary structure, fourteen ClpP subunits assemble into 2 heptameric rings which stack back to back to give a disk-like structure with a central cavity, resembling the structure of eukaryotic proteasomes.

The protein resides in the cytoplasm. It catalyses the reaction Hydrolysis of proteins to small peptides in the presence of ATP and magnesium. alpha-casein is the usual test substrate. In the absence of ATP, only oligopeptides shorter than five residues are hydrolyzed (such as succinyl-Leu-Tyr-|-NHMec, and Leu-Tyr-Leu-|-Tyr-Trp, in which cleavage of the -Tyr-|-Leu- and -Tyr-|-Trp bonds also occurs).. Its function is as follows. Cleaves peptides in various proteins in a process that requires ATP hydrolysis. Has a chymotrypsin-like activity. Plays a major role in the degradation of misfolded proteins. This is ATP-dependent Clp protease proteolytic subunit 2 from Cutibacterium acnes (strain DSM 16379 / KPA171202) (Propionibacterium acnes).